Here is a 21-residue protein sequence, read N- to C-terminus: Venom peptide Ocy4 (21 aa).

As to expression, expressed by the venom gland.

The protein localises to the secreted. The protein is Venom peptide Ocy4 of Opisthacanthus cayaporum (South American scorpion).